The sequence spans 199 residues: MKIGVIAIQGAVSEHVDALRRALKERGVEAEVVEIKHKGIVPECSGIVIPGGESTTLCRLLAREGIAEEIKEAAAKGVPILGTCAGLIVIAKEGDRQVEKTGQELLGIMDTRVNRNAFGRQRDSFEAELEVFILDSPFTGVFIRAPGIVSCGPGVKVLSRLEGMIVAAEQGNVLALAFHPELTDDLRIHQYFLDKVLNC.

Residue 52 to 54 (GES) coordinates L-glutamine. Residue cysteine 84 is the Nucleophile of the active site. Residues arginine 115 and 143 to 144 (IR) contribute to the L-glutamine site. Catalysis depends on charge relay system residues histidine 179 and glutamate 181.

It belongs to the glutaminase PdxT/SNO family. In the presence of PdxS, forms a dodecamer of heterodimers. Only shows activity in the heterodimer.

The catalysed reaction is aldehydo-D-ribose 5-phosphate + D-glyceraldehyde 3-phosphate + L-glutamine = pyridoxal 5'-phosphate + L-glutamate + phosphate + 3 H2O + H(+). It catalyses the reaction L-glutamine + H2O = L-glutamate + NH4(+). It functions in the pathway cofactor biosynthesis; pyridoxal 5'-phosphate biosynthesis. Its function is as follows. Catalyzes the hydrolysis of glutamine to glutamate and ammonia as part of the biosynthesis of pyridoxal 5'-phosphate. The resulting ammonia molecule is channeled to the active site of PdxS. This chain is Pyridoxal 5'-phosphate synthase subunit PdxT, found in Methanosarcina mazei (strain ATCC BAA-159 / DSM 3647 / Goe1 / Go1 / JCM 11833 / OCM 88) (Methanosarcina frisia).